The sequence spans 478 residues: Membrane-bound lytic murein transglycosylase F (478 aa).

Residues 1 to 22 (MTRFLFAIILGFLLTACQQVTV) form the signal peptide. A non-LT domain region spans residues 23–257 (EETEYVPHKL…HLNEKYFGHV (235 aa)). The segment at 258-478 (KRFDYIDTRA…PGTLSPDKPK (221 aa)) is LT domain. Residue glutamate 302 is part of the active site. Positions 446–478 (SKQQNSDEEEPSDLASEDGPAPVPGTLSPDKPK) are disordered. Residues 451 to 461 (SDEEEPSDLAS) show a composition bias toward acidic residues.

In the N-terminal section; belongs to the bacterial solute-binding protein 3 family. It in the C-terminal section; belongs to the transglycosylase Slt family.

The protein resides in the cell outer membrane. The catalysed reaction is Exolytic cleavage of the (1-&gt;4)-beta-glycosidic linkage between N-acetylmuramic acid (MurNAc) and N-acetylglucosamine (GlcNAc) residues in peptidoglycan, from either the reducing or the non-reducing ends of the peptidoglycan chains, with concomitant formation of a 1,6-anhydrobond in the MurNAc residue.. Its function is as follows. Murein-degrading enzyme that degrades murein glycan strands and insoluble, high-molecular weight murein sacculi, with the concomitant formation of a 1,6-anhydromuramoyl product. Lytic transglycosylases (LTs) play an integral role in the metabolism of the peptidoglycan (PG) sacculus. Their lytic action creates space within the PG sacculus to allow for its expansion as well as for the insertion of various structures such as secretion systems and flagella. The sequence is that of Membrane-bound lytic murein transglycosylase F from Shewanella sp. (strain ANA-3).